An 833-amino-acid polypeptide reads, in one-letter code: MTASPDPAQRIDALRRRIEDANYRYHVLDEPQMADADYDKLMRELEALERAHPELASADSPTQRVGHLAASRFAEVRHALPMLSLGNAFSEEEVTEFVRRISERLEVKQPLFSAEPKLDGLAISLRYENGEFVQGATRGDGATGEDVSANLRTVKAIPLRLRGEGWPQVLEVRGEVYMPRAAFEAYNAQMRAQGGKVLANPRNGAAGSLRQLDARITAQRPLSFFAYGVGEVSEGALPQTHSAILAQLRAWGFPVSALVEVVQGSDGLLAYYQRIGAARDGLAFDIDGVVYKLDDLAGQREMGFVSRAPRWAIAHKFPAQEQSTTVEAIEIQIGRTGAATPVARLKPVHVAGVIVTNATLHNADQIARLDVRVGDTVIVRRAGDVIPEVAAVVADQRPPGTQAWQMPTQCPVCGSQIVREEGQAVWRCSGELTCPAQRKEAFRHFVSRRAMDVDGLGEKFIEVLVDSGLVKGVADLYLLSVDQLLQLRLISTAESPHAFLREAREHLASGAYAQLETSVVGIGVDLAGERDVPQTWQADLLRAGLPRFDWNRKKIATKWAENLIEAIETSRDTTLERFLFALGIEHVGESTAKALSAWFGDLELIRHLPWPLFKRVPDIGGEVARSLGHFFDQAGNQQAIDDLLQRGVRIGDTHPPSPKLREALSFASVLEDMDIPKVTPVRAQQLAASVDSFAALRTAGADALQQAGVPAPVVAALLQWLDRPENTALANAAQQAMETVLARLPQADALQTGPLDGQTVVITGTLAALTRDAAKQRLEALGAKVAGSVSKKTAFLVAGEEAGSKLDKAQSLGVEIWGEARLLAFLGDHGQQP.

Residues 35-39, 84-85, and Glu115 contribute to the NAD(+) site; these read DADYD and SL. Residue Lys117 is the N6-AMP-lysine intermediate of the active site. Positions 138, 175, 292, and 316 each coordinate NAD(+). Zn(2+)-binding residues include Cys410, Cys413, Cys428, and Cys434. Positions 750-833 constitute a BRCT domain; sequence LQTGPLDGQT…AFLGDHGQQP (84 aa).

This sequence belongs to the NAD-dependent DNA ligase family. LigA subfamily. The cofactor is Mg(2+). Mn(2+) is required as a cofactor.

It catalyses the reaction NAD(+) + (deoxyribonucleotide)n-3'-hydroxyl + 5'-phospho-(deoxyribonucleotide)m = (deoxyribonucleotide)n+m + AMP + beta-nicotinamide D-nucleotide.. DNA ligase that catalyzes the formation of phosphodiester linkages between 5'-phosphoryl and 3'-hydroxyl groups in double-stranded DNA using NAD as a coenzyme and as the energy source for the reaction. It is essential for DNA replication and repair of damaged DNA. In Xanthomonas euvesicatoria pv. vesicatoria (strain 85-10) (Xanthomonas campestris pv. vesicatoria), this protein is DNA ligase.